A 238-amino-acid polypeptide reads, in one-letter code: Sugar fermentation stimulation protein homolog (238 aa).

It belongs to the SfsA family.

This is Sugar fermentation stimulation protein homolog from Histophilus somni (strain 2336) (Haemophilus somnus).